The sequence spans 648 residues: Probable LRR receptor-like serine/threonine-protein kinase At4g30520 (648 aa).

A signal peptide spans 1–30; the sequence is MVVVTKKTMKIQIHLLYSFLFLCFSTLTLS. The Extracellular segment spans residues 31–238; it reads SEPRNPEVEA…SSSGRRSNRL (208 aa). 2 N-linked (GlcNAc...) asparagine glycosylation sites follow: asparagine 99 and asparagine 112. LRR repeat units lie at residues 100–125, 127–148, 149–172, and 174–199; these read LTNLRQVSLQNNNISGKIPPELGFLP, LQTLDLSNNRFSGDIPVSIDQL, SSLQYLRLNNNSLSGPFPASLSQI, and HLSFLDLSYNNLSGPVPKFPARTFNV. 2 N-linked (GlcNAc...) asparagine glycosylation sites follow: asparagine 158 and asparagine 184. A helical transmembrane segment spans residues 239–259; sequence AIALSVSLGSVVILVLALGSF. The Cytoplasmic portion of the chain corresponds to 260 to 648; sequence CWYRKKQRRL…SFAMELSGPR (389 aa). Threonine 300 is subject to Phosphothreonine. The region spanning 303-582 is the Protein kinase domain; sequence FSSKNILGAG…EGDGLAERWA (280 aa). 309 to 317 contacts ATP; it reads LGAGGFGNV. Threonine 326 is modified (phosphothreonine). Lysine 331 contacts ATP. Phosphoserine occurs at positions 384 and 387. Residue aspartate 426 is the Proton acceptor of the active site. Phosphothreonine is present on residues threonine 459, threonine 460, and threonine 465. At tyrosine 473 the chain carries Phosphotyrosine. Serine 475 carries the post-translational modification Phosphoserine. Position 476 is a phosphothreonine (threonine 476). Position 480 is a phosphoserine (serine 480). Threonine 555 carries the phosphothreonine modification.

Belongs to the protein kinase superfamily. Ser/Thr protein kinase family.

Its subcellular location is the cell membrane. The catalysed reaction is L-seryl-[protein] + ATP = O-phospho-L-seryl-[protein] + ADP + H(+). It carries out the reaction L-threonyl-[protein] + ATP = O-phospho-L-threonyl-[protein] + ADP + H(+). The sequence is that of Probable LRR receptor-like serine/threonine-protein kinase At4g30520 from Arabidopsis thaliana (Mouse-ear cress).